A 122-amino-acid polypeptide reads, in one-letter code: MIQSFTRLTVADNSGAKEVMCIKVLGGSKRRYATVGDVIIASVKKALPNGKIKKGQVVKAVVVRTKKEVQRDNGSLIRFDDNAAVILDNKREPVGTRIFGPVGREVRYANFMKIVSLAPEVL.

It belongs to the universal ribosomal protein uL14 family. Part of the 50S ribosomal subunit. Forms a cluster with proteins L3 and L19. In the 70S ribosome, L14 and L19 interact and together make contacts with the 16S rRNA in bridges B5 and B8.

In terms of biological role, binds to 23S rRNA. Forms part of two intersubunit bridges in the 70S ribosome. The sequence is that of Large ribosomal subunit protein uL14 from Wolinella succinogenes (strain ATCC 29543 / DSM 1740 / CCUG 13145 / JCM 31913 / LMG 7466 / NCTC 11488 / FDC 602W) (Vibrio succinogenes).